We begin with the raw amino-acid sequence, 385 residues long: ATP synthase subunit a-1 (385 aa).

The propeptide occupies 1–133 (MRRIFLFDEN…ALNIVGQAAA (133 aa)). Transmembrane regions (helical) follow at residues 154 to 174 (FSFTNSSLFMLLTLSFFLLLI), 220 to 240 (FFPCILVTFLFLLFCNLQGMI), 249 to 269 (HFLITLALSFSIFIGITIVGF), 276 to 296 (FFSFLLPAGVPLPLAPFLVLL), 316 to 336 (MMAGHSLVKILSGFAWTMLCM), 339 to 359 (IFYFIGALGPLFIVLALTGLE), and 362 to 382 (VAILQAYVFTILICIYLNDAI).

The protein belongs to the ATPase A chain family. As to quaternary structure, F-type ATPases have 2 components, CF(1) - the catalytic core - and CF(0) - the membrane proton channel. CF(1) has five subunits: alpha(3), beta(3), gamma(1), delta(1), epsilon(1). CF(0) has three main subunits: a, b and c.

It is found in the mitochondrion inner membrane. In terms of biological role, mitochondrial membrane ATP synthase (F(1)F(0) ATP synthase or Complex V) produces ATP from ADP in the presence of a proton gradient across the membrane which is generated by electron transport complexes of the respiratory chain. F-type ATPases consist of two structural domains, F(1) - containing the extramembraneous catalytic core and F(0) - containing the membrane proton channel, linked together by a central stalk and a peripheral stalk. During catalysis, ATP synthesis in the catalytic domain of F(1) is coupled via a rotary mechanism of the central stalk subunits to proton translocation. Key component of the proton channel; it may play a direct role in the translocation of protons across the membrane. The polypeptide is ATP synthase subunit a-1 (ATP6-1) (Arabidopsis thaliana (Mouse-ear cress)).